A 521-amino-acid polypeptide reads, in one-letter code: uncharacterized protein (521 aa).

Positions 1-22 are cleaved as a signal peptide; that stretch reads MGFKLKGFGFLTLFASQAFLTA. The N-palmitoyl cysteine moiety is linked to residue C23. C23 carries the S-diacylglycerol cysteine lipid modification.

The protein belongs to the MG067/MG068/MG395 family.

The protein resides in the cell membrane. This is an uncharacterized protein from Mycoplasma pneumoniae (strain ATCC 29342 / M129 / Subtype 1) (Mycoplasmoides pneumoniae).